The primary structure comprises 197 residues: Histidine biosynthesis bifunctional protein HisIE (197 aa).

The segment at methionine 1–phenylalanine 108 is phosphoribosyl-AMP cyclohydrolase. Residues tryptophan 109–lysine 197 form a phosphoribosyl-ATP pyrophosphohydrolase region.

It in the N-terminal section; belongs to the PRA-CH family. In the C-terminal section; belongs to the PRA-PH family.

The protein localises to the cytoplasm. It catalyses the reaction 1-(5-phospho-beta-D-ribosyl)-ATP + H2O = 1-(5-phospho-beta-D-ribosyl)-5'-AMP + diphosphate + H(+). It carries out the reaction 1-(5-phospho-beta-D-ribosyl)-5'-AMP + H2O = 1-(5-phospho-beta-D-ribosyl)-5-[(5-phospho-beta-D-ribosylamino)methylideneamino]imidazole-4-carboxamide. Its pathway is amino-acid biosynthesis; L-histidine biosynthesis; L-histidine from 5-phospho-alpha-D-ribose 1-diphosphate: step 2/9. It functions in the pathway amino-acid biosynthesis; L-histidine biosynthesis; L-histidine from 5-phospho-alpha-D-ribose 1-diphosphate: step 3/9. The sequence is that of Histidine biosynthesis bifunctional protein HisIE (hisI) from Thermotoga maritima (strain ATCC 43589 / DSM 3109 / JCM 10099 / NBRC 100826 / MSB8).